Reading from the N-terminus, the 633-residue chain is GRAM domain-containing protein 4 (633 aa).

3 disordered regions span residues 1 to 46 (MGIA…VRPR), 72 to 109 (LAES…AGPG), and 182 to 216 (VLKA…RSQG). Residues 27 to 39 (PWDKGLSGREPPR) show a composition bias toward basic and acidic residues. Residues Ser-75 and Ser-79 each carry the phosphoserine modification. A compositionally biased stretch (basic and acidic residues) spans 95–104 (SPRDSEELRD). The stretch at 134-190 (HLEIALLEKHFLQEELRKLREETNSEMLRQELDRERQRRIELEQKMQEVLKARSEEQ) forms a coiled coil. Low complexity predominate over residues 190 to 205 (QPAQPQQPPKGQSQAS). Helical transmembrane passes span 295-315 (VYMN…LAIL), 389-409 (TTQK…FFPY), and 411-431 (LVGL…DFIF). Residues 500-578 (GNFHEIFNLT…MDITDIQKYK (79 aa)) form the GRAM domain.

As to quaternary structure, interacts with RTN4 (isoform B).

It localises to the mitochondrion membrane. The protein localises to the endoplasmic reticulum membrane. In terms of biological role, plays a role as a mediator of E2F1-induced apoptosis in the absence of p53/TP53. Inhibits TLR9 response to nucelic acids and regulates TLR9-mediated innate immune response. The sequence is that of GRAM domain-containing protein 4 from Mus musculus (Mouse).